A 336-amino-acid polypeptide reads, in one-letter code: Tetraacyldisaccharide 4'-kinase (336 aa).

Position 58–65 (58–65 (AVGGSGKT)) interacts with ATP.

Belongs to the LpxK family.

The enzyme catalyses a lipid A disaccharide + ATP = a lipid IVA + ADP + H(+). It functions in the pathway glycolipid biosynthesis; lipid IV(A) biosynthesis; lipid IV(A) from (3R)-3-hydroxytetradecanoyl-[acyl-carrier-protein] and UDP-N-acetyl-alpha-D-glucosamine: step 6/6. Transfers the gamma-phosphate of ATP to the 4'-position of a tetraacyldisaccharide 1-phosphate intermediate (termed DS-1-P) to form tetraacyldisaccharide 1,4'-bis-phosphate (lipid IVA). This is Tetraacyldisaccharide 4'-kinase from Aromatoleum aromaticum (strain DSM 19018 / LMG 30748 / EbN1) (Azoarcus sp. (strain EbN1)).